The primary structure comprises 244 residues: Inactive chemokine-binding protein (244 aa).

The segment at 1-79 (MHVPASLQQS…STSVEDVDPP (79 aa)) is disordered. Positions 37 to 53 (QDQTPTNDKICQSVTEI) are enriched in polar residues. Acidic residues predominate over residues 54–77 (TESESDPDPEVESEDDSTSVEDVD).

This sequence belongs to the orthopoxvirus OPG001 family.

Its subcellular location is the host cytoplasm. Its function is as follows. The protein is truncated in this vaccinal strain and presumably inactive, because the lack of signal peptide prevents the protein of being secreted. In the other strains inhibits host immune defense by binding to host chemokines. Binds host CC chemokines (beta chemokines) such as RANTES with high affinity, but not CXC or C chemokines (alpha and gamma chemokines). This is Inactive chemokine-binding protein (OPG001) from Vaccinia virus (strain Copenhagen) (VACV).